The following is a 151-amino-acid chain: Large ribosomal subunit protein bL9 (151 aa).

Belongs to the bacterial ribosomal protein bL9 family.

Binds to the 23S rRNA. This chain is Large ribosomal subunit protein bL9, found in Kosmotoga olearia (strain ATCC BAA-1733 / DSM 21960 / TBF 19.5.1).